The sequence spans 230 residues: Phosphoglycolate phosphatase (230 aa).

Catalysis depends on Asp9, which acts as the Nucleophile. Positions 9, 11, and 175 each coordinate Mg(2+).

The protein belongs to the HAD-like hydrolase superfamily. CbbY/CbbZ/Gph/YieH family. The cofactor is Mg(2+).

The catalysed reaction is 2-phosphoglycolate + H2O = glycolate + phosphate. It participates in organic acid metabolism; glycolate biosynthesis; glycolate from 2-phosphoglycolate: step 1/1. Specifically catalyzes the dephosphorylation of 2-phosphoglycolate. Is involved in the dissimilation of the intracellular 2-phosphoglycolate formed during the DNA repair of 3'-phosphoglycolate ends, a major class of DNA lesions induced by oxidative stress. The protein is Phosphoglycolate phosphatase of Psychrobacter arcticus (strain DSM 17307 / VKM B-2377 / 273-4).